Consider the following 189-residue polypeptide: UPF0398 protein BH1768 (189 aa).

The protein belongs to the UPF0398 family.

The polypeptide is UPF0398 protein BH1768 (Halalkalibacterium halodurans (strain ATCC BAA-125 / DSM 18197 / FERM 7344 / JCM 9153 / C-125) (Bacillus halodurans)).